The sequence spans 257 residues: Imidazole glycerol phosphate synthase subunit HisF (257 aa).

Active-site residues include D12 and D131.

Belongs to the HisA/HisF family. As to quaternary structure, heterodimer of HisH and HisF.

Its subcellular location is the cytoplasm. The catalysed reaction is 5-[(5-phospho-1-deoxy-D-ribulos-1-ylimino)methylamino]-1-(5-phospho-beta-D-ribosyl)imidazole-4-carboxamide + L-glutamine = D-erythro-1-(imidazol-4-yl)glycerol 3-phosphate + 5-amino-1-(5-phospho-beta-D-ribosyl)imidazole-4-carboxamide + L-glutamate + H(+). It participates in amino-acid biosynthesis; L-histidine biosynthesis; L-histidine from 5-phospho-alpha-D-ribose 1-diphosphate: step 5/9. In terms of biological role, IGPS catalyzes the conversion of PRFAR and glutamine to IGP, AICAR and glutamate. The HisF subunit catalyzes the cyclization activity that produces IGP and AICAR from PRFAR using the ammonia provided by the HisH subunit. In Burkholderia pseudomallei (strain 1106a), this protein is Imidazole glycerol phosphate synthase subunit HisF.